Reading from the N-terminus, the 520-residue chain is U3 small nucleolar RNA-associated protein 15 homolog (520 aa).

7 WD repeats span residues 36 to 75, 78 to 117, 120 to 159, 162 to 202, 204 to 242, 246 to 285, and 287 to 326; these read KEFG…PIKT, RFKD…PLRQ, GHTK…EIVS, EHSD…SVMT, EHGH…QLLV, NHHK…VVHS, and NYAT…SKEK.

In terms of assembly, part of the small subunit (SSU) processome, composed of more than 70 proteins and the RNA chaperone small nucleolar RNA (snoRNA) U3. May be a component of the proposed t-UTP subcomplex of the ribosomal small subunit (SSU) processome.

The protein localises to the nucleus. It localises to the nucleolus. In terms of biological role, ribosome biogenesis factor. Involved in nucleolar processing of pre-18S ribosomal RNA. Required for optimal pre-ribosomal RNA transcription by RNA polymerase I. Part of the small subunit (SSU) processome, first precursor of the small eukaryotic ribosomal subunit. During the assembly of the SSU processome in the nucleolus, many ribosome biogenesis factors, an RNA chaperone and ribosomal proteins associate with the nascent pre-rRNA and work in concert to generate RNA folding, modifications, rearrangements and cleavage as well as targeted degradation of pre-ribosomal RNA by the RNA exosome. The protein is U3 small nucleolar RNA-associated protein 15 homolog (UTP15) of Gallus gallus (Chicken).